The chain runs to 398 residues: Riboflavin transporter RfnT (398 aa).

12 consecutive transmembrane segments (helical) span residues I13 to V35, L45 to F67, R74 to A91, I95 to V117, I137 to I156, M166 to L188, V220 to V242, A252 to T274, I281 to F300, F305 to T324, F345 to W367, and W372 to L389.

It belongs to the major facilitator superfamily.

Its subcellular location is the cell membrane. Transports riboflavin into the cell. In Brucella anthropi (strain ATCC 49188 / DSM 6882 / CCUG 24695 / JCM 21032 / LMG 3331 / NBRC 15819 / NCTC 12168 / Alc 37) (Ochrobactrum anthropi), this protein is Riboflavin transporter RfnT.